Consider the following 270-residue polypeptide: SAGA-associated factor 29 homolog A (270 aa).

Serine 2 carries the N-acetylserine modification. The interval 85–113 is disordered; that stretch reads LPSGPTGQQRRKLEGNEQKRKRMKVDTDV. Basic and acidic residues predominate over residues 95 to 113; that stretch reads RKLEGNEQKRKRMKVDTDV. Residues 125–270 form the SGF29 C-terminal domain; the sequence is EAYASLKGEQ…VVALPEGHRQ (146 aa). Histone H3K4me3 N-terminus binding stretches follow at residues 168–170 and 217–220; these read DEE and GTTA. The histone H3K4me3 binding stretch occupies residues 242-245; sequence FDDD.

This sequence belongs to the SGF29 family. Expressed in roots, rosette leaves, cauline leaves, stems and flowers.

It is found in the nucleus. Chromatin reader component of the transcription regulatory histone acetylation (HAT) complex SAGA. Involved in salt stress tolerance. Enhances the effect of ADA2B in the positive regulation of salt-induced gene expression. The chain is SAGA-associated factor 29 homolog A from Arabidopsis thaliana (Mouse-ear cress).